The sequence spans 158 residues: Transcriptional repressor NrdR (158 aa).

The segment at 3 to 34 is a zinc-finger region; that stretch reads CPYCGYPDSKVIDSRPTDDNTSIRRRRECLKC. Positions 49–139 constitute an ATP-cone domain; that stretch reads ILVIKKDNRR…VYRQFKDINT (91 aa).

The protein belongs to the NrdR family. Zn(2+) is required as a cofactor.

In terms of biological role, negatively regulates transcription of bacterial ribonucleotide reductase nrd genes and operons by binding to NrdR-boxes. In Thermoanaerobacter sp. (strain X514), this protein is Transcriptional repressor NrdR.